We begin with the raw amino-acid sequence, 576 residues long: Sulfite reductase [NADPH] hemoprotein beta-component (576 aa).

[4Fe-4S] cluster contacts are provided by cysteine 435, cysteine 441, cysteine 480, and cysteine 484. Cysteine 484 lines the siroheme pocket.

Belongs to the nitrite and sulfite reductase 4Fe-4S domain family. In terms of assembly, alpha(8)-beta(8). The alpha component is a flavoprotein, the beta component is a hemoprotein. The cofactor is siroheme. It depends on [4Fe-4S] cluster as a cofactor.

It carries out the reaction hydrogen sulfide + 3 NADP(+) + 3 H2O = sulfite + 3 NADPH + 4 H(+). It functions in the pathway sulfur metabolism; hydrogen sulfide biosynthesis; hydrogen sulfide from sulfite (NADPH route): step 1/1. Component of the sulfite reductase complex that catalyzes the 6-electron reduction of sulfite to sulfide. This is one of several activities required for the biosynthesis of L-cysteine from sulfate. This Photorhabdus laumondii subsp. laumondii (strain DSM 15139 / CIP 105565 / TT01) (Photorhabdus luminescens subsp. laumondii) protein is Sulfite reductase [NADPH] hemoprotein beta-component.